We begin with the raw amino-acid sequence, 773 residues long: Cytochrome c oxidase subunit 1+2 (773 aa).

Residues 1-491 (MKLLEIYDKQ…LIASYGSLIT (491 aa)) are COX1. A helical membrane pass occupies residues 41-61 (TMYITFSIFAGIIGTLLSLVI). Ca(2+) is bound at residue E64. Residue H85 participates in Fe(II)-heme a binding. The next 6 helical transmembrane spans lie at 87-111 (LIMI…NWFL), 130-150 (LWLI…GIGA), 173-193 (VGIL…INFL), 211-231 (LFVW…PVLA), 262-278 (LFHP…FGII), and 290-310 (IFGV…GFLV). H264 provides a ligand contact to Cu cation. A cross-link (1'-histidyl-3'-tyrosine (His-Tyr)) is located at residues 264-268 (HPEVY). An O2-binding site is contributed by Y268. Cu cation is bound by residues H314 and H315. 2 helical membrane-spanning segments follow: residues 335 to 355 (IIAI…WGGV) and 362 to 382 (MLFV…GVVL). Mg(2+) contacts are provided by H392 and D393. A run of 5 helical transmembrane segments spans residues 396-416 (YVVA…IFAG), 444-464 (FWTM…LGLA), 483-503 (IASY…VNIF), 555-575 (IFFY…RILW), and 604-624 (GTVI…LIAI). A heme a3-binding site is contributed by H400. H402 lines the Fe(II)-heme a pocket. The COX2 stretch occupies residues 492-773 (AFGLLFFFVN…VQEYLGRLYK (282 aa)). Cu cation is bound by residues H709, C744, C748, and H752.

This sequence in the N-terminal section; belongs to the heme-copper respiratory oxidase family. It in the C-terminal section; belongs to the cytochrome c oxidase subunit 2 family. Component of the cytochrome c oxidase (complex IV, CIV), a multisubunit enzyme composed of a catalytic core of 3 subunits and several supernumerary subunits. The complex exists as a monomer or a dimer and forms supercomplexes (SCs) in the inner mitochondrial membrane with ubiquinol-cytochrome c oxidoreductase (cytochrome b-c1 complex, complex III, CIII). It depends on heme as a cofactor. The cofactor is Cu cation.

Its subcellular location is the mitochondrion inner membrane. It catalyses the reaction 4 Fe(II)-[cytochrome c] + O2 + 8 H(+)(in) = 4 Fe(III)-[cytochrome c] + 2 H2O + 4 H(+)(out). Its pathway is energy metabolism; oxidative phosphorylation. Functionally, component of the cytochrome c oxidase, the last enzyme in the mitochondrial electron transport chain which drives oxidative phosphorylation. The respiratory chain contains 3 multisubunit complexes succinate dehydrogenase (complex II, CII), ubiquinol-cytochrome c oxidoreductase (cytochrome b-c1 complex, complex III, CIII) and cytochrome c oxidase (complex IV, CIV), that cooperate to transfer electrons derived from NADH and succinate to molecular oxygen, creating an electrochemical gradient over the inner membrane that drives transmembrane transport and the ATP synthase. Cytochrome c oxidase is the component of the respiratory chain that catalyzes the reduction of oxygen to water. Electrons originating from reduced cytochrome c in the intermembrane space (IMS) are transferred via the dinuclear copper A center (CU(A)) of subunit 2 and heme A of subunit 1 to the active site in subunit 1, a binuclear center (BNC) formed by heme A3 and copper B (CU(B)). The BNC reduces molecular oxygen to 2 water molecules using 4 electrons from cytochrome c in the IMS and 4 protons from the mitochondrial matrix. This chain is Cytochrome c oxidase subunit 1+2 (cox1/2), found in Dictyostelium citrinum (Slime mold).